A 195-amino-acid chain; its full sequence is Imidazoleglycerol-phosphate dehydratase (195 aa).

It belongs to the imidazoleglycerol-phosphate dehydratase family.

The protein localises to the cytoplasm. The enzyme catalyses D-erythro-1-(imidazol-4-yl)glycerol 3-phosphate = 3-(imidazol-4-yl)-2-oxopropyl phosphate + H2O. Its pathway is amino-acid biosynthesis; L-histidine biosynthesis; L-histidine from 5-phospho-alpha-D-ribose 1-diphosphate: step 6/9. The polypeptide is Imidazoleglycerol-phosphate dehydratase (Hydrogenovibrio crunogenus (strain DSM 25203 / XCL-2) (Thiomicrospira crunogena)).